The sequence spans 397 residues: Phosphoglycerate kinase (397 aa).

Substrate is bound by residues aspartate 25–asparagine 27, arginine 41, histidine 64–arginine 67, arginine 118, and arginine 151. Residues lysine 202, glutamate 324, and glycine 350–threonine 353 each bind ATP.

The protein belongs to the phosphoglycerate kinase family. Monomer.

It is found in the cytoplasm. It catalyses the reaction (2R)-3-phosphoglycerate + ATP = (2R)-3-phospho-glyceroyl phosphate + ADP. It participates in carbohydrate degradation; glycolysis; pyruvate from D-glyceraldehyde 3-phosphate: step 2/5. This Leptothrix cholodnii (strain ATCC 51168 / LMG 8142 / SP-6) (Leptothrix discophora (strain SP-6)) protein is Phosphoglycerate kinase.